Here is a 328-residue protein sequence, read N- to C-terminus: Sin3 histone deacetylase corepressor complex component SDS3 (328 aa).

A compositionally biased stretch (low complexity) spans 1–22 (MSAAGLLAPAPAPAAAPAAPEY). Residues 1–69 (MSAAGLLAPA…HDEEDYVEMK (69 aa)) form a disordered region. N-acetylserine is present on S2. Residues 2-170 (SAAGLLAPAP…IENEKLTMEL (169 aa)) are mediates interaction with USP17L2. Composition is skewed to acidic residues over residues 23-37 (YPEDEEELESAEDDE) and 45-54 (SDEDTEDASE). A phosphoserine mark is found at S32 and S45. T49 carries the post-translational modification Phosphothreonine. Position 53 is a phosphoserine (S53). A compositionally biased stretch (basic and acidic residues) spans 56–69 (DLAKHDEEDYVEMK). Residues 66 to 171 (VEMKEQMYQD…ENEKLTMELT (106 aa)) adopt a coiled-coil conformation. Glycyl lysine isopeptide (Lys-Gly) (interchain with G-Cter in SUMO2) cross-links involve residues K69, K178, and K201. The sin3 interaction domain (SID) stretch occupies residues 188-226 (RPNDPVPIPDKRRKPAPAQLNYLLTDEQIMEDLRTLNKL). Residues 226 to 252 (LKSPKRPASPSSPEHLPATPAESPAQR) form a disordered region. 3 positions are modified to phosphoserine: S228, S234, and S237. T244 is modified (phosphothreonine).

The protein belongs to the SDS3 family. Interacts with HCFC1. Homodimer. Component of the SIN3 histone deacetylase (HDAC) corepressor complex. Interacts with SIN3A. Interaction with SIN3B enhances the interaction between SIN3B and HDAC1 to form a complex. Component of a mSin3A corepressor complex that contains SIN3A, SAP130, SUDS3/SAP45, ARID4B/SAP180, HDAC1 and HDAC2. Interacts with USP17L2; the interaction is direct. Interacts with FOXK2. In terms of processing, polyubiquitinated. 'Lys-63'-polyubiquitinated SUDS3 positively regulates histone deacetylation. Regulated through deubiquitination by USP17L2/USP17 that cleaves 'Lys-63'-linked ubiquitin chains. As to expression, expressed in all newborn tissues tested, including brain, kidney and liver.

The protein resides in the nucleus. Functionally, regulatory protein which represses transcription and augments histone deacetylase activity of HDAC1. May have a potential role in tumor suppressor pathways through regulation of apoptosis. May function in the assembly and/or enzymatic activity of the mSin3A corepressor complex or in mediating interactions between the complex and other regulatory complexes. The protein is Sin3 histone deacetylase corepressor complex component SDS3 (Suds3) of Mus musculus (Mouse).